A 792-amino-acid chain; its full sequence is Probable beta-D-xylosidase 6 (792 aa).

The signal sequence occupies residues 1–18; it reads MNLQLTLISLLFFTSAIA. N44, N104, N124, and N239 each carry an N-linked (GlcNAc...) asparagine glycan. D309 is a catalytic residue. N-linked (GlcNAc...) asparagine glycosylation is found at N444 and N618.

It belongs to the glycosyl hydrolase 3 family.

It is found in the secreted. Its subcellular location is the extracellular space. It localises to the extracellular matrix. The protein is Probable beta-D-xylosidase 6 (BXL6) of Arabidopsis thaliana (Mouse-ear cress).